A 404-amino-acid polypeptide reads, in one-letter code: Cysteine desulfurase IscS (404 aa).

Pyridoxal 5'-phosphate contacts are provided by residues 75-76 (AT), asparagine 155, glutamine 183, and 203-205 (SAH). At lysine 206 the chain carries N6-(pyridoxal phosphate)lysine. Threonine 243 contributes to the pyridoxal 5'-phosphate binding site. Cysteine 328 (cysteine persulfide intermediate) is an active-site residue. Cysteine 328 is a binding site for [2Fe-2S] cluster.

This sequence belongs to the class-V pyridoxal-phosphate-dependent aminotransferase family. NifS/IscS subfamily. As to quaternary structure, homodimer. Forms a heterotetramer with IscU, interacts with other sulfur acceptors. Requires pyridoxal 5'-phosphate as cofactor.

Its subcellular location is the cytoplasm. It carries out the reaction (sulfur carrier)-H + L-cysteine = (sulfur carrier)-SH + L-alanine. It functions in the pathway cofactor biosynthesis; iron-sulfur cluster biosynthesis. Functionally, master enzyme that delivers sulfur to a number of partners involved in Fe-S cluster assembly, tRNA modification or cofactor biosynthesis. Catalyzes the removal of elemental sulfur atoms from cysteine to produce alanine. Functions as a sulfur delivery protein for Fe-S cluster synthesis onto IscU, an Fe-S scaffold assembly protein, as well as other S acceptor proteins. The protein is Cysteine desulfurase IscS of Vibrio atlanticus (strain LGP32) (Vibrio splendidus (strain Mel32)).